The primary structure comprises 339 residues: DNA-directed RNA polymerase subunit alpha (339 aa).

An alpha N-terminal domain (alpha-NTD) region spans residues 1 to 233; it reads MVREEVAGST…DLFLPFLHAE (233 aa). Residues 264–339 form an alpha C-terminal domain (alpha-CTD) region; sequence KKGIPLNCIF…IDLLKNKLSF (76 aa).

This sequence belongs to the RNA polymerase alpha chain family. As to quaternary structure, in plastids the minimal PEP RNA polymerase catalytic core is composed of four subunits: alpha, beta, beta', and beta''. When a (nuclear-encoded) sigma factor is associated with the core the holoenzyme is formed, which can initiate transcription.

The protein localises to the plastid. It is found in the chloroplast. It catalyses the reaction RNA(n) + a ribonucleoside 5'-triphosphate = RNA(n+1) + diphosphate. Its function is as follows. DNA-dependent RNA polymerase catalyzes the transcription of DNA into RNA using the four ribonucleoside triphosphates as substrates. This chain is DNA-directed RNA polymerase subunit alpha, found in Aegilops uniaristata (Goatgrass).